We begin with the raw amino-acid sequence, 363 residues long: Probable transglycosylase BTH_I0986 (363 aa).

This sequence belongs to the glycosyltransferase group 1 family. Glycosyltransferase 4 subfamily.

In terms of biological role, probably a transglycosylase. Probably involved in synthesis of the outer membrane receptor for a cellular contact-dependent growth inhibition (CDI) system. The protein is Probable transglycosylase BTH_I0986 of Burkholderia thailandensis (strain ATCC 700388 / DSM 13276 / CCUG 48851 / CIP 106301 / E264).